Reading from the N-terminus, the 122-residue chain is Large ribosomal subunit protein bL12 (122 aa).

Belongs to the bacterial ribosomal protein bL12 family. In terms of assembly, homodimer. Part of the ribosomal stalk of the 50S ribosomal subunit. Forms a multimeric L10(L12)X complex, where L10 forms an elongated spine to which 2 to 4 L12 dimers bind in a sequential fashion. Binds GTP-bound translation factors.

Its function is as follows. Forms part of the ribosomal stalk which helps the ribosome interact with GTP-bound translation factors. Is thus essential for accurate translation. The polypeptide is Large ribosomal subunit protein bL12 (Borrelia hermsii (strain HS1 / DAH)).